Consider the following 308-residue polypeptide: Porphobilinogen deaminase (308 aa).

At Cys-240 the chain carries S-(dipyrrolylmethanemethyl)cysteine.

It belongs to the HMBS family. In terms of assembly, monomer. Requires dipyrromethane as cofactor.

The enzyme catalyses 4 porphobilinogen + H2O = hydroxymethylbilane + 4 NH4(+). It functions in the pathway porphyrin-containing compound metabolism; protoporphyrin-IX biosynthesis; coproporphyrinogen-III from 5-aminolevulinate: step 2/4. Functionally, tetrapolymerization of the monopyrrole PBG into the hydroxymethylbilane pre-uroporphyrinogen in several discrete steps. This is Porphobilinogen deaminase from Maridesulfovibrio salexigens (strain ATCC 14822 / DSM 2638 / NCIMB 8403 / VKM B-1763) (Desulfovibrio salexigens).